Here is a 238-residue protein sequence, read N- to C-terminus: Transcriptional activator HAC1 (238 aa).

The disordered stretch occupies residues 1–39 (MEMTDFELTSNSQSNLAIPTNFKSTLPPRKRAKTKEEKE). Positions 7–24 (ELTSNSQSNLAIPTNFKS) are enriched in polar residues. The 64-residue stretch at 39 to 102 (EQRRIERILR…LTCSHDAFVA (64 aa)) folds into the bZIP domain. A basic motif region spans residues 41 to 61 (RRIERILRNRRAAHQSREKKR). The interval 67 to 74 (LERKCSLL) is leucine-zipper. The interval 115–152 (GASLDTRASSHSSSDTFTPSPLNCTMEPATLSPKSMRD) is disordered. The span at 117-134 (SLDTRASSHSSSDTFTPS) shows a compositional bias: low complexity.

The protein belongs to the bZIP family. As to quaternary structure, homodimer.

The protein resides in the nucleus. Its function is as follows. Transcriptional activator involved in the unfolded protein response (UPR) pathway. Recognizes and binds to the UPR element (UPRE) in the promoter of UPR-regulated genes such as KAR2, PDI1, EUG1 and FKB2. Increases the synthesis of endoplasmic reticulum-resident proteins required for protein folding as well as components of the secretory pathway. The polypeptide is Transcriptional activator HAC1 (HAC1) (Saccharomyces cerevisiae (strain ATCC 204508 / S288c) (Baker's yeast)).